Consider the following 510-residue polypeptide: NAD(P)H-quinone oxidoreductase subunit 2 A, chloroplastic (510 aa).

13 consecutive transmembrane segments (helical) span residues 26-46 (LFDG…ILLL), 57-77 (IPWF…ALLF), 99-119 (IFQF…VEYI), 124-144 (MAIT…MFLC), 149-169 (LITI…LSGY), 183-203 (YLLM…WLYG), 227-247 (PGIS…LSPA), 295-315 (WHPL…LIAI), 323-342 (MLAY…IIVG), 354-374 (YMLF…LFGL), 395-415 (ALSL…AGFF), 418-438 (LHLF…IGLF), and 484-504 (MIVC…IIAI).

It belongs to the complex I subunit 2 family. As to quaternary structure, NDH is composed of at least 16 different subunits, 5 of which are encoded in the nucleus.

Its subcellular location is the plastid. It localises to the chloroplast thylakoid membrane. It carries out the reaction a plastoquinone + NADH + (n+1) H(+)(in) = a plastoquinol + NAD(+) + n H(+)(out). The enzyme catalyses a plastoquinone + NADPH + (n+1) H(+)(in) = a plastoquinol + NADP(+) + n H(+)(out). Its function is as follows. NDH shuttles electrons from NAD(P)H:plastoquinone, via FMN and iron-sulfur (Fe-S) centers, to quinones in the photosynthetic chain and possibly in a chloroplast respiratory chain. The immediate electron acceptor for the enzyme in this species is believed to be plastoquinone. Couples the redox reaction to proton translocation, and thus conserves the redox energy in a proton gradient. This chain is NAD(P)H-quinone oxidoreductase subunit 2 A, chloroplastic, found in Oenothera biennis (German evening primrose).